A 344-amino-acid polypeptide reads, in one-letter code: Uroporphyrinogen decarboxylase (344 aa).

Substrate-binding positions include 23–27 (RQAGR), Asp-73, Tyr-149, Thr-204, and His-321.

This sequence belongs to the uroporphyrinogen decarboxylase family. As to quaternary structure, homodimer.

It is found in the cytoplasm. It carries out the reaction uroporphyrinogen III + 4 H(+) = coproporphyrinogen III + 4 CO2. It functions in the pathway porphyrin-containing compound metabolism; protoporphyrin-IX biosynthesis; coproporphyrinogen-III from 5-aminolevulinate: step 4/4. In terms of biological role, catalyzes the decarboxylation of four acetate groups of uroporphyrinogen-III to yield coproporphyrinogen-III. The protein is Uroporphyrinogen decarboxylase of Francisella philomiragia subsp. philomiragia (strain ATCC 25017 / CCUG 19701 / FSC 153 / O#319-036).